Here is a 305-residue protein sequence, read N- to C-terminus: GMP synthase [glutamine-hydrolyzing] subunit B (305 aa).

Residues 2–184 (VKPEKFIPKA…LKLPDEICER (183 aa)) form the GMPS ATP-PPase domain. Residue 29-35 (SGGVDSS) coordinates ATP.

As to quaternary structure, heterodimer composed of a glutamine amidotransferase subunit (A) and a GMP-binding subunit (B).

The catalysed reaction is XMP + L-glutamine + ATP + H2O = GMP + L-glutamate + AMP + diphosphate + 2 H(+). It participates in purine metabolism; GMP biosynthesis; GMP from XMP (L-Gln route): step 1/1. In terms of biological role, catalyzes the synthesis of GMP from XMP. The sequence is that of GMP synthase [glutamine-hydrolyzing] subunit B from Methanosarcina barkeri (strain Fusaro / DSM 804).